Consider the following 188-residue polypeptide: Protein GrpE (188 aa).

Positions 1 to 24 are disordered; that stretch reads MSDENKPGEAAELDAGVAPEAQPE.

Belongs to the GrpE family. In terms of assembly, homodimer.

Its subcellular location is the cytoplasm. Participates actively in the response to hyperosmotic and heat shock by preventing the aggregation of stress-denatured proteins, in association with DnaK and GrpE. It is the nucleotide exchange factor for DnaK and may function as a thermosensor. Unfolded proteins bind initially to DnaJ; upon interaction with the DnaJ-bound protein, DnaK hydrolyzes its bound ATP, resulting in the formation of a stable complex. GrpE releases ADP from DnaK; ATP binding to DnaK triggers the release of the substrate protein, thus completing the reaction cycle. Several rounds of ATP-dependent interactions between DnaJ, DnaK and GrpE are required for fully efficient folding. This Hyphomonas neptunium (strain ATCC 15444) protein is Protein GrpE.